Consider the following 764-residue polypeptide: Polyribonucleotide nucleotidyltransferase (764 aa).

Asp-541 and Asp-547 together coordinate Mg(2+). The region spanning 607-666 is the KH domain; the sequence is PRVTAIKIPVDKIGEVIGPKGKVINQITEDTGANISIEDDGTVFVGATDGPSAQAAIDAI. The S1 motif domain maps to 678–747; that stretch reads GERFLGTVVK…NRGKISLVPV (70 aa).

The protein belongs to the polyribonucleotide nucleotidyltransferase family. The cofactor is Mg(2+).

It localises to the cytoplasm. The catalysed reaction is RNA(n+1) + phosphate = RNA(n) + a ribonucleoside 5'-diphosphate. Involved in mRNA degradation. Catalyzes the phosphorolysis of single-stranded polyribonucleotides processively in the 3'- to 5'-direction. The sequence is that of Polyribonucleotide nucleotidyltransferase from Nocardia farcinica (strain IFM 10152).